Here is a 328-residue protein sequence, read N- to C-terminus: Dolichyl-diphosphooligosaccharide--protein glycosyltransferase subunit MAGT1 (328 aa).

Residues methionine 1–glycine 22 form the signal peptide. The Extracellular portion of the chain corresponds to glutamine 23–proline 177. The Thioredoxin domain maps to tryptophan 40–aspartate 168. Asparagine 64 carries N-linked (GlcNAc...) asparagine glycosylation. An intrachain disulfide couples cysteine 80 to cysteine 83. Residues asparagine 178 to leucine 198 form a helical membrane-spanning segment. The Cytoplasmic portion of the chain corresponds to arginine 199–glycine 211. The chain crosses the membrane as a helical span at residues tryptophan 212–isoleucine 232. Over arginine 233–glutamine 257 the chain is Extracellular. A helical transmembrane segment spans residues phenylalanine 258–leucine 278. Over leucine 279–lysine 293 the chain is Cytoplasmic. Residues isoleucine 294–phenylalanine 314 traverse the membrane as a helical segment. The Extracellular segment spans residues arginine 315–serine 328.

It belongs to the OST3/OST6 family. Accessory component of the STT3B-containing form of the oligosaccharyltransferase (OST) complex. OST exists in two different complex forms which contain common core subunits RPN1, RPN2, OST48, OST4, DAD1 and TMEM258, either STT3A or STT3B as catalytic subunits, and form-specific accessory subunits. OST can form stable complexes with the Sec61 complex or with both the Sec61 and TRAP complexes.

Its subcellular location is the cell membrane. It is found in the endoplasmic reticulum. It localises to the endoplasmic reticulum membrane. The protein operates within protein modification; protein glycosylation. In terms of biological role, accessory component of the STT3B-containing form of the N-oligosaccharyl transferase (OST) complex which catalyzes the transfer of a high mannose oligosaccharide from a lipid-linked oligosaccharide donor to an asparagine residue within an Asn-X-Ser/Thr consensus motif in nascent polypeptide chains. Involved in N-glycosylation of STT3B-dependent substrates. Specifically required for the glycosylation of a subset of acceptor sites that are near cysteine residues; in this function seems to act redundantly with TUSC3. In its oxidized form proposed to form transient mixed disulfides with a glycoprotein substrate to facilitate access of STT3B to the unmodified acceptor site. Also has oxidoreductase-independent functions in the STT3B-containing OST complex possibly involving substrate recognition. Could indirectly play a role in Mg(2+) transport in epithelial cells. In Gallus gallus (Chicken), this protein is Dolichyl-diphosphooligosaccharide--protein glycosyltransferase subunit MAGT1.